Consider the following 426-residue polypeptide: Phosphomethylpyrimidine synthase (426 aa).

Residues N65, M94, Y123, H162, 184 to 186 (SRG), 225 to 228 (DGMR), and E264 contribute to the substrate site. H268 contacts Zn(2+). Substrate is bound at residue Y291. Residue H332 participates in Zn(2+) binding. Positions 408, 411, and 415 each coordinate [4Fe-4S] cluster.

The protein belongs to the ThiC family. It depends on [4Fe-4S] cluster as a cofactor.

The catalysed reaction is 5-amino-1-(5-phospho-beta-D-ribosyl)imidazole + S-adenosyl-L-methionine = 4-amino-2-methyl-5-(phosphooxymethyl)pyrimidine + CO + 5'-deoxyadenosine + formate + L-methionine + 3 H(+). The protein operates within cofactor biosynthesis; thiamine diphosphate biosynthesis. Its function is as follows. Catalyzes the synthesis of the hydroxymethylpyrimidine phosphate (HMP-P) moiety of thiamine from aminoimidazole ribotide (AIR) in a radical S-adenosyl-L-methionine (SAM)-dependent reaction. The chain is Phosphomethylpyrimidine synthase from Methanococcus maripaludis (strain C5 / ATCC BAA-1333).